Reading from the N-terminus, the 101-residue chain is Small ribosomal subunit protein bS6 (101 aa).

It belongs to the bacterial ribosomal protein bS6 family.

In terms of biological role, binds together with bS18 to 16S ribosomal RNA. In Nitratidesulfovibrio vulgaris (strain ATCC 29579 / DSM 644 / CCUG 34227 / NCIMB 8303 / VKM B-1760 / Hildenborough) (Desulfovibrio vulgaris), this protein is Small ribosomal subunit protein bS6.